The primary structure comprises 319 residues: MKTETPSVKIVAITADEAGQRIDNFLRTQLKGVPKSMIYRILRKGEVRVNKKRIKPEYKLEAGDEVRIPPVRVAEREEEAVSPHLQKVAALADVILYEDDHILVLNKPSGTAVHGGSGLSFGVIEGLRALRPEARFLELVHRLDRDTSGVLLVAKKRSALRSLHEQLREKGMQKDYLALVRGQWQSYVKSVQAPLLKNILQSGERIVRVSQEGKPSETRFKVEERYAFATLVRCSPVTGRTHQIRVHTQYAGHPIAFDDRYGDREFDRQLTEAGTGLNRLFLHAAALKFTHPGTGEVMRIEAPMDEGLKRCLQKLRNAR.

The S4 RNA-binding domain maps to 20–83 (QRIDNFLRTQ…AEREEEAVSP (64 aa)). Residue aspartate 144 is part of the active site.

It belongs to the pseudouridine synthase RluA family.

The catalysed reaction is uridine(955/2504/2580) in 23S rRNA = pseudouridine(955/2504/2580) in 23S rRNA. Functionally, responsible for synthesis of pseudouridine from uracil at positions 955, 2504 and 2580 in 23S ribosomal RNA. The sequence is that of Ribosomal large subunit pseudouridine synthase C (rluC) from Escherichia coli O6:H1 (strain CFT073 / ATCC 700928 / UPEC).